Here is a 359-residue protein sequence, read N- to C-terminus: Phospho-N-acetylmuramoyl-pentapeptide-transferase (359 aa).

10 helical membrane passes run 26-46, 75-95, 97-117, 134-154, 166-186, 197-217, 233-253, 261-281, 286-306, and 336-356; these read TIYAAITALIICFLLGPWLIR, GGVLIIFAVVVSTLLWANLTI, YVWLVLMVTLGYGLIGFADDY, LACEVCIALLVSVVLYAKPGF, VLPDLGWGYIFLSTFIIVGAA, GLAIGPAITCFMTYLLFAYFA, GVGELSIFCGAIVGAGIGFLW, VFMGDTGSLSLGGALGCLAIV, ILLAIVGGIFVLETFSVIFQV, and KVIVRFWIISILLALLAISTL.

It belongs to the glycosyltransferase 4 family. MraY subfamily. It depends on Mg(2+) as a cofactor.

It localises to the cell inner membrane. It catalyses the reaction UDP-N-acetyl-alpha-D-muramoyl-L-alanyl-gamma-D-glutamyl-meso-2,6-diaminopimeloyl-D-alanyl-D-alanine + di-trans,octa-cis-undecaprenyl phosphate = di-trans,octa-cis-undecaprenyl diphospho-N-acetyl-alpha-D-muramoyl-L-alanyl-D-glutamyl-meso-2,6-diaminopimeloyl-D-alanyl-D-alanine + UMP. The protein operates within cell wall biogenesis; peptidoglycan biosynthesis. Catalyzes the initial step of the lipid cycle reactions in the biosynthesis of the cell wall peptidoglycan: transfers peptidoglycan precursor phospho-MurNAc-pentapeptide from UDP-MurNAc-pentapeptide onto the lipid carrier undecaprenyl phosphate, yielding undecaprenyl-pyrophosphoryl-MurNAc-pentapeptide, known as lipid I. The polypeptide is Phospho-N-acetylmuramoyl-pentapeptide-transferase (Syntrophus aciditrophicus (strain SB)).